The sequence spans 802 residues: Leucine--tRNA ligase (802 aa).

The 'HIGH' region motif lies at 40–51 (PYPSGAGLHVGH). The short motif at 576-580 (KMSKS) is the 'KMSKS' region element. Position 579 (Lys579) interacts with ATP.

It belongs to the class-I aminoacyl-tRNA synthetase family.

The protein localises to the cytoplasm. The enzyme catalyses tRNA(Leu) + L-leucine + ATP = L-leucyl-tRNA(Leu) + AMP + diphosphate. This is Leucine--tRNA ligase from Bacillus anthracis (strain A0248).